Reading from the N-terminus, the 206-residue chain is uncharacterized protein (206 aa).

Residues 21–43 (VPINITMSICALTALLKSYSITG) form a helical membrane-spanning segment.

The protein localises to the membrane. This is an uncharacterized protein from Acanthamoeba polyphaga (Amoeba).